Here is a 202-residue protein sequence, read N- to C-terminus: MNTVVGRRIINGRRRPRRQTRRAQRPQPVVVVQTSRATQRRPRRRRRGNNRTGRTVPTRGAGSSETFVFSKDNLAGSSSGAITFGPSLSDCPAFSNGMLKAYHEYKISMVILEFVSEASSQNSGSIAYELDPHCKLNSLSSTINKFGITKPGKRAFTASYINGTEWHDVAEDQFRILYKGNGSSSIAGSFRITIKCQFHNPK.

The disordered stretch occupies residues 1–64; that stretch reads MNTVVGRRII…TVPTRGAGSS (64 aa). A compositionally biased stretch (basic residues) spans 10-24; it reads INGRRRPRRQTRRAQ. The segment covering 25-36 has biased composition (low complexity); it reads RPQPVVVVQTSR. Residues 38-49 are compositionally biased toward basic residues; the sequence is TQRRPRRRRRGN. A compositionally biased stretch (low complexity) spans 50-60; the sequence is NRTGRTVPTRG.

Belongs to the luteoviruses capsid protein family.

The protein localises to the virion. Its function is as follows. Major capsid protein that self-assembles to form an icosahedral capsid with a T=3 symmetry, about 23 nm in diameter, and consisting of 180 capsid proteins monomers. Most of the 180 monomers are the major capsid protein, but a small percentage contain the minor capsid protein, which has a long C-terminal extension. This is Major capsid protein from Turnip yellows virus (isolate FL-1) (TuYV).